Reading from the N-terminus, the 72-residue chain is Light-harvesting polypeptide B-885 alpha-1 chain (72 aa).

The Cytoplasmic segment spans residues Ser1–Thr16. Residues Val17–Leu37 traverse the membrane as a helical segment. His33 contributes to the a bacteriochlorophyll binding site. The Periplasmic portion of the chain corresponds to Gly38 to Lys72.

Belongs to the antenna complex alpha subunit family. As to quaternary structure, the core complex is formed by different alpha and beta chains, binding bacteriochlorophyll molecules, and arranged most probably in tetrameric structures disposed around the reaction center. The non-pigmented gamma chains may constitute additional components.

It localises to the cell inner membrane. Functionally, antenna complexes are light-harvesting systems, which transfer the excitation energy to the reaction centers. The protein is Light-harvesting polypeptide B-885 alpha-1 chain of Rhodocyclus tenuis (Rhodospirillum tenue).